Here is a 173-residue protein sequence, read N- to C-terminus: Ribosome maturation factor RimM (173 aa).

The 75-residue stretch at 95-169 folds into the PRC barrel domain; the sequence is DPDEFYDHQL…VIEIDPPEGL (75 aa).

This sequence belongs to the RimM family. As to quaternary structure, binds ribosomal protein uS19.

It is found in the cytoplasm. In terms of biological role, an accessory protein needed during the final step in the assembly of 30S ribosomal subunit, possibly for assembly of the head region. Essential for efficient processing of 16S rRNA. May be needed both before and after RbfA during the maturation of 16S rRNA. It has affinity for free ribosomal 30S subunits but not for 70S ribosomes. The chain is Ribosome maturation factor RimM from Mycobacteroides abscessus (strain ATCC 19977 / DSM 44196 / CCUG 20993 / CIP 104536 / JCM 13569 / NCTC 13031 / TMC 1543 / L948) (Mycobacterium abscessus).